A 271-amino-acid polypeptide reads, in one-letter code: Mannosyl-3-phosphoglycerate phosphatase (271 aa).

Asp13 (nucleophile) is an active-site residue. Mg(2+)-binding residues include Asp13, Asp15, and Asp214.

This sequence belongs to the HAD-like hydrolase superfamily. MPGP family. Mg(2+) is required as a cofactor.

It localises to the cytoplasm. The catalysed reaction is 2-O-(alpha-D-mannosyl)-3-phosphoglycerate + H2O = (2R)-2-O-(alpha-D-mannosyl)-glycerate + phosphate. This Escherichia coli (strain 55989 / EAEC) protein is Mannosyl-3-phosphoglycerate phosphatase.